Here is a 474-residue protein sequence, read N- to C-terminus: tRNA-2-methylthio-N(6)-dimethylallyladenosine synthase (474 aa).

In terms of domain architecture, MTTase N-terminal spans Glu21–Ser138. Residues Cys30, Cys67, Cys101, Cys175, Cys179, and Cys182 each contribute to the [4Fe-4S] cluster site. One can recognise a Radical SAM core domain in the interval Arg161 to Ala395. Residues Arg397–Ser460 enclose the TRAM domain.

Belongs to the methylthiotransferase family. MiaB subfamily. As to quaternary structure, monomer. [4Fe-4S] cluster is required as a cofactor.

It is found in the cytoplasm. It carries out the reaction N(6)-dimethylallyladenosine(37) in tRNA + (sulfur carrier)-SH + AH2 + 2 S-adenosyl-L-methionine = 2-methylsulfanyl-N(6)-dimethylallyladenosine(37) in tRNA + (sulfur carrier)-H + 5'-deoxyadenosine + L-methionine + A + S-adenosyl-L-homocysteine + 2 H(+). Catalyzes the methylthiolation of N6-(dimethylallyl)adenosine (i(6)A), leading to the formation of 2-methylthio-N6-(dimethylallyl)adenosine (ms(2)i(6)A) at position 37 in tRNAs that read codons beginning with uridine. The sequence is that of tRNA-2-methylthio-N(6)-dimethylallyladenosine synthase from Halorhodospira halophila (strain DSM 244 / SL1) (Ectothiorhodospira halophila (strain DSM 244 / SL1)).